Consider the following 201-residue polypeptide: Thymidine kinase (201 aa).

Residues 9-16 (SAMNAGKS) and 87-90 (DECH) each bind ATP. Glutamate 88 acts as the Proton acceptor in catalysis. 4 residues coordinate Zn(2+): cysteine 145, cysteine 147, cysteine 182, and histidine 185.

It belongs to the thymidine kinase family. As to quaternary structure, homotetramer.

The protein resides in the cytoplasm. It carries out the reaction thymidine + ATP = dTMP + ADP + H(+). This is Thymidine kinase from Photorhabdus laumondii subsp. laumondii (strain DSM 15139 / CIP 105565 / TT01) (Photorhabdus luminescens subsp. laumondii).